Reading from the N-terminus, the 150-residue chain is UPF0260 protein PP_4587 (150 aa).

Belongs to the UPF0260 family.

The chain is UPF0260 protein PP_4587 from Pseudomonas putida (strain ATCC 47054 / DSM 6125 / CFBP 8728 / NCIMB 11950 / KT2440).